Here is a 505-residue protein sequence, read N- to C-terminus: Probable bifunctional methylthioribulose-1-phosphate dehydratase/enolase-phosphatase E1 (505 aa).

Residues Met1 to Asp237 form a methylthioribulose-1-phosphate dehydratase region. Cys109 is a substrate binding site. Zn(2+) contacts are provided by His127 and His129. Residue Glu152 is the Proton donor/acceptor; for methylthioribulose-1-phosphate dehydratase activity of the active site. His202 lines the Zn(2+) pocket. The tract at residues Phe266–Leu505 is enolase-phosphatase E1. Residues Asp269 and Glu271 each contribute to the Mg(2+) site. Residues Ser404–Ser405 and Lys438 each bind substrate. Residue Asp464 coordinates Mg(2+).

In the N-terminal section; belongs to the aldolase class II family. MtnB subfamily. The protein in the C-terminal section; belongs to the HAD-like hydrolase superfamily. MasA/MtnC family. Requires Zn(2+) as cofactor. It depends on Mg(2+) as a cofactor.

It catalyses the reaction 5-(methylsulfanyl)-D-ribulose 1-phosphate = 5-methylsulfanyl-2,3-dioxopentyl phosphate + H2O. The enzyme catalyses 5-methylsulfanyl-2,3-dioxopentyl phosphate + H2O = 1,2-dihydroxy-5-(methylsulfanyl)pent-1-en-3-one + phosphate. Its pathway is amino-acid biosynthesis; L-methionine biosynthesis via salvage pathway; L-methionine from S-methyl-5-thio-alpha-D-ribose 1-phosphate: step 2/6. It participates in amino-acid biosynthesis; L-methionine biosynthesis via salvage pathway; L-methionine from S-methyl-5-thio-alpha-D-ribose 1-phosphate: step 3/6. The protein operates within amino-acid biosynthesis; L-methionine biosynthesis via salvage pathway; L-methionine from S-methyl-5-thio-alpha-D-ribose 1-phosphate: step 4/6. The protein is Probable bifunctional methylthioribulose-1-phosphate dehydratase/enolase-phosphatase E1 of Physcomitrium patens (Spreading-leaved earth moss).